We begin with the raw amino-acid sequence, 512 residues long: Bifunctional pantoate ligase/cytidylate kinase (512 aa).

Residues M1–R276 form a pantoate--beta-alanine ligase region. M27–H34 provides a ligand contact to ATP. Catalysis depends on H34, which acts as the Proton donor. Q58 contributes to the (R)-pantoate binding site. Q58 is a beta-alanine binding site. G147–D150 serves as a coordination point for ATP. (R)-pantoate is bound at residue Q153. Residues L176 and L184–R187 contribute to the ATP site. The cytidylate kinase stretch occupies residues V277–A512.

This sequence in the N-terminal section; belongs to the pantothenate synthetase family. In the C-terminal section; belongs to the cytidylate kinase family. Type 1 subfamily.

It localises to the cytoplasm. The enzyme catalyses (R)-pantoate + beta-alanine + ATP = (R)-pantothenate + AMP + diphosphate + H(+). It carries out the reaction CMP + ATP = CDP + ADP. The catalysed reaction is dCMP + ATP = dCDP + ADP. Its pathway is cofactor biosynthesis; (R)-pantothenate biosynthesis; (R)-pantothenate from (R)-pantoate and beta-alanine: step 1/1. Its function is as follows. Catalyzes the condensation of pantoate with beta-alanine in an ATP-dependent reaction via a pantoyl-adenylate intermediate. In terms of biological role, catalyzes the transfer of a phosphate group from ATP to either CMP or dCMP to form CDP or dCDP and ADP, respectively. This is Bifunctional pantoate ligase/cytidylate kinase from Synechococcus sp. (strain RCC307).